Here is a 430-residue protein sequence, read N- to C-terminus: UDP-N-acetylglucosamine 1-carboxyvinyltransferase (430 aa).

22–23 contributes to the phosphoenolpyruvate binding site; that stretch reads KN. Arg-102 serves as a coordination point for UDP-N-acetyl-alpha-D-glucosamine. Residue Cys-126 is the Proton donor of the active site. A 2-(S-cysteinyl)pyruvic acid O-phosphothioketal modification is found at Cys-126. UDP-N-acetyl-alpha-D-glucosamine is bound by residues 131-135, 172-175, Asp-317, and Ile-339; these read RPVDL and KVSV.

Belongs to the EPSP synthase family. MurA subfamily.

It localises to the cytoplasm. It carries out the reaction phosphoenolpyruvate + UDP-N-acetyl-alpha-D-glucosamine = UDP-N-acetyl-3-O-(1-carboxyvinyl)-alpha-D-glucosamine + phosphate. Its pathway is cell wall biogenesis; peptidoglycan biosynthesis. Functionally, cell wall formation. Adds enolpyruvyl to UDP-N-acetylglucosamine. This Sinorhizobium medicae (strain WSM419) (Ensifer medicae) protein is UDP-N-acetylglucosamine 1-carboxyvinyltransferase.